The following is a 198-amino-acid chain: Protein FAM219B (198 aa).

Disordered stretches follow at residues 1 to 58 and 83 to 146; these read MATA…KRGP and RRKG…EQVN. Serine 14, serine 91, serine 125, and serine 127 each carry phosphoserine. The segment covering 134 to 146 has biased composition (polar residues); that stretch reads RYSSGYSSAEQVN.

The protein belongs to the FAM219 family.

The sequence is that of Protein FAM219B (FAM219B) from Homo sapiens (Human).